A 237-amino-acid chain; its full sequence is Putative exosome complex component rrp40 (237 aa).

One can recognise an S1 motif domain in the interval 67-137; it reads EDMVIGTIIE…EPEVVCLSQK (71 aa).

It belongs to the RRP40 family. In terms of assembly, component of the RNA exosome complex.

It localises to the cytoplasm. Its subcellular location is the nucleus. It is found in the nucleolus. Its function is as follows. Non-catalytic component of the RNA exosome complex which has 3'-&gt;5' exoribonuclease activity and participates in a multitude of cellular RNA processing and degradation events. The polypeptide is Putative exosome complex component rrp40 (exosc3) (Dictyostelium discoideum (Social amoeba)).